Reading from the N-terminus, the 237-residue chain is Ribosomal RNA small subunit methyltransferase G (237 aa).

S-adenosyl-L-methionine is bound by residues glycine 78, phenylalanine 83, 129 to 130, and arginine 148; that span reads AE.

Belongs to the methyltransferase superfamily. RNA methyltransferase RsmG family.

It localises to the cytoplasm. Functionally, specifically methylates the N7 position of a guanine in 16S rRNA. The chain is Ribosomal RNA small subunit methyltransferase G from Streptococcus pyogenes serotype M49 (strain NZ131).